The sequence spans 1102 residues: DNA-directed RNA polymerase subunit beta (1102 aa).

The disordered stretch occupies residues leucine 1081 to aspartate 1102.

The protein belongs to the RNA polymerase beta chain family. As to quaternary structure, in cyanobacteria the RNAP catalytic core is composed of 2 alpha, 1 beta, 1 beta', 1 gamma and 1 omega subunit. When a sigma factor is associated with the core the holoenzyme is formed, which can initiate transcription.

It catalyses the reaction RNA(n) + a ribonucleoside 5'-triphosphate = RNA(n+1) + diphosphate. DNA-dependent RNA polymerase catalyzes the transcription of DNA into RNA using the four ribonucleoside triphosphates as substrates. In Trichodesmium erythraeum (strain IMS101), this protein is DNA-directed RNA polymerase subunit beta.